A 577-amino-acid chain; its full sequence is MPKTISVRVTTMDAELEFAIQPNTTGKQLFDQVVKTIGLREVWFFGLQYQDTKAFSTWLKLNKKVTAQDVRKESPLLFKFRAKFYPEDVSEELIQDITQRLFFLQVKEGILNDDIYCPPETAVLLASYAVQSKYGDFNKEVHKSGYLAGDKLLPQRVLEQHKLNKDQWEERIQVWHEEHRGMLREDAVLEYLKIAQDLEMYGVNYFSIKNKKGSELWLGVDALGLNIYEQNDRLTPKIGFPWSEIRNISFNDKKFVIKPIDKKAPDFVFYAPRLRINKRILALCMGNHELYMRRRKPDTIEVQQMKAQAREEKHQKQMERALLENEKKKRELAEKEKEKIEREKEELMEKLKQIEEQTKKAQQELEEQTRRALELEQERKRAQSEAEKLAKERQEAEEAKEALLQASRDQKKTQEQLASEMAELTARVSQLEMARKKKESEAEECHQKAQMVQEDLEKTRAELKTAMSTPHVAEPAENEHDEQDENGAEASAELRADAMAKDRSEEERTTEAEKNERVQKHLKALTSELANARDESKKTTNDMIHAENMRLGRDKYKTLRQIRQGNTKQRIDEFESM.

The FERM domain occupies 2–295; sequence PKTISVRVTT…GNHELYMRRR (294 aa). S74 carries the phosphoserine modification. K79 carries the N6-acetyllysine modification. Position 83 is an N6-succinyllysine (K83). The [IL]-x-C-x-x-[DE] motif signature appears at 115–120; it reads IYCPPE. Y116 bears the Phosphotyrosine mark. At C117 the chain carries S-nitrosocysteine. 2 positions are modified to N6-acetyllysine: K139 and K165. Disordered regions lie at residues 322–342, 358–453, and 468–549; these read LLEN…KIER, TKKA…QMVQ, and STPH…AENM. Positions 358–401 are enriched in basic and acidic residues; it reads TKKAQQELEEQTRRALELEQERKRAQSEAEKLAKERQEAEEAKE. S407 is modified (phosphoserine). Composition is skewed to basic and acidic residues over residues 438-447 and 492-519; these read KESEAEECHQ and AELR…ERVQ. S527 carries the phosphoserine modification. Residues 531–549 are compositionally biased toward basic and acidic residues; the sequence is NARDESKKTTNDMIHAENM. At T558 the chain carries Phosphothreonine; by ROCK2 and STK10.

As to quaternary structure, in resting T-cells, part of a PAG1-NHERF1-MSN complex which is disrupted upon TCR activation. Interacts with NHERF1. Interacts with PPP1R16B. Interacts with PDZD8. Interacts with SELPLG and SYK; these interactions mediate the activation of SYK by SELPLG. Interacts with PDPN (via cytoplasmic domain); this interaction activates RHOA and promotes epithelial-mesenchymal transition. Interacts with SPN/CD43 cytoplasmic tail. Interacts with CD44. Interacts with ICAM2. Interacts with ICAM3 (via C-terminus). Interacts with PDZD8. Interacts with F-actin. Interacts with CD46. Interacts with PTPN6. Phosphorylation on Thr-558 is crucial for the formation of microvilli-like structures. Phosphorylation by ROCK2 suppresses the head-to-tail association of the N-terminal and C-terminal halves resulting in an opened conformation which is capable of actin and membrane-binding. Phosphorylation on Thr-558 by STK10 negatively regulates lymphocyte migration and polarization. In terms of processing, S-nitrosylation of Cys-117 is induced by interferon-gamma and oxidatively-modified low-densitity lipoprotein (LDL(ox)) implicating the iNOS-S100A8/9 transnitrosylase complex.

Its subcellular location is the cell membrane. The protein resides in the cytoplasm. The protein localises to the cytoskeleton. It localises to the apical cell membrane. It is found in the cell projection. Its subcellular location is the microvillus membrane. The protein resides in the microvillus. A head-to-tail association, of the N-terminal and C-terminal halves results in a closed conformation (inactive form) which is incapable of actin or membrane-binding. Functionally, ezrin-radixin-moesin (ERM) family protein that connects the actin cytoskeleton to the plasma membrane and thereby regulates the structure and function of specific domains of the cell cortex. Tethers actin filaments by oscillating between a resting and an activated state providing transient interactions between moesin and the actin cytoskeleton. Once phosphorylated on its C-terminal threonine, moesin is activated leading to interaction with F-actin and cytoskeletal rearrangement. These rearrangements regulate many cellular processes, including cell shape determination, membrane transport, and signal transduction. The role of moesin is particularly important in immunity acting on both T and B-cells homeostasis and self-tolerance, regulating lymphocyte egress from lymphoid organs. Modulates phagolysosomal biogenesis in macrophages. Participates also in immunologic synapse formation. In Rattus norvegicus (Rat), this protein is Moesin.